Here is a 223-residue protein sequence, read N- to C-terminus: ATP-dependent Clp protease proteolytic subunit 2 (223 aa).

The Nucleophile role is filled by S118. H143 is an active-site residue.

This sequence belongs to the peptidase S14 family. As to quaternary structure, fourteen ClpP subunits assemble into 2 heptameric rings which stack back to back to give a disk-like structure with a central cavity, resembling the structure of eukaryotic proteasomes.

The protein localises to the cytoplasm. It carries out the reaction Hydrolysis of proteins to small peptides in the presence of ATP and magnesium. alpha-casein is the usual test substrate. In the absence of ATP, only oligopeptides shorter than five residues are hydrolyzed (such as succinyl-Leu-Tyr-|-NHMec, and Leu-Tyr-Leu-|-Tyr-Trp, in which cleavage of the -Tyr-|-Leu- and -Tyr-|-Trp bonds also occurs).. Cleaves peptides in various proteins in a process that requires ATP hydrolysis. Has a chymotrypsin-like activity. Plays a major role in the degradation of misfolded proteins. This Leifsonia xyli subsp. xyli (strain CTCB07) protein is ATP-dependent Clp protease proteolytic subunit 2.